Reading from the N-terminus, the 318-residue chain is MLAPKKMVRGNYSMVTEFILLGLTDRPELQPLLFVLFLVIYLITVGGNLGMMVLIRIDSRLHTPMYYFLASLSCLDLCYSTNVTPKMLVNFLSEKKTISYAACLVQCYFFIAMVITEYYMLAVMAYDRYMAICNPLLYSSKMSKGVCVRLIAGPYIYGFLSGLMETMWTYRLTFCGSNIINHFYCADPPLIRLSCSDTFIKETSMFVVAGFNLSNSLFIILISYLFILIAILRMRSAEGRRKAFSTCGSHLVAVTVFYGTLFCMYVRPPTDKSVEQSKIIAVFYTFVSPMLNPIIYSLRNKDVKHAFWKLVRRNVLSK.

Residues 1–31 are Extracellular-facing; sequence MLAPKKMVRGNYSMVTEFILLGLTDRPELQP. N11 carries N-linked (GlcNAc...) asparagine glycosylation. Residues 32-52 traverse the membrane as a helical segment; sequence LLFVLFLVIYLITVGGNLGMM. Over 53–60 the chain is Cytoplasmic; that stretch reads VLIRIDSR. A helical transmembrane segment spans residues 61-81; sequence LHTPMYYFLASLSCLDLCYST. Over 82–105 the chain is Extracellular; the sequence is NVTPKMLVNFLSEKKTISYAACLV. C103 and C195 are disulfide-bonded. Residues 106-126 form a helical membrane-spanning segment; that stretch reads QCYFFIAMVITEYYMLAVMAY. Topologically, residues 127-139 are cytoplasmic; the sequence is DRYMAICNPLLYS. The chain crosses the membrane as a helical span at residues 140 to 160; that stretch reads SKMSKGVCVRLIAGPYIYGFL. The Extracellular portion of the chain corresponds to 161-202; it reads SGLMETMWTYRLTFCGSNIINHFYCADPPLIRLSCSDTFIKE. A helical transmembrane segment spans residues 203–223; it reads TSMFVVAGFNLSNSLFIILIS. The Cytoplasmic portion of the chain corresponds to 224–243; that stretch reads YLFILIAILRMRSAEGRRKA. Residues 244 to 264 form a helical membrane-spanning segment; the sequence is FSTCGSHLVAVTVFYGTLFCM. Residues 265 to 277 lie on the Extracellular side of the membrane; it reads YVRPPTDKSVEQS. The helical transmembrane segment at 278 to 298 threads the bilayer; sequence KIIAVFYTFVSPMLNPIIYSL. The Cytoplasmic segment spans residues 299 to 318; the sequence is RNKDVKHAFWKLVRRNVLSK.

Belongs to the G-protein coupled receptor 1 family.

The protein localises to the cell membrane. Functionally, potential odorant receptor. In Mus musculus (Mouse), this protein is Olfactory receptor 5M5.